A 93-amino-acid polypeptide reads, in one-letter code: Vacuolar ATPase assembly integral membrane protein VMA21 (93 aa).

The Cytoplasmic segment spans residues 1–21 (MSNRVSTGKMAMAPQESVQPA). Residues 22-42 (VLYKLVLFALLMAVVPIGTYF) form a helical membrane-spanning segment. At 43–54 (STLNYLWDGSTT) the chain is on the lumenal side. Residues 55-75 (FAAISAIAAANLILVGYVVVA) form a helical membrane-spanning segment. The Cytoplasmic portion of the chain corresponds to 76-93 (FREDAASRTGPLPEKKTS). The short motif at 90–93 (KKTS) is the Prevents secretion from ER element.

This sequence belongs to the VMA21 family.

It is found in the endoplasmic reticulum membrane. It localises to the endoplasmic reticulum-Golgi intermediate compartment membrane. The protein localises to the cytoplasmic vesicle. The protein resides in the COPII-coated vesicle membrane. In terms of biological role, required for the assembly of the V0 complex of the vacuolar ATPase (V-ATPase) in the endoplasmic reticulum. This Cryptococcus neoformans var. neoformans serotype D (strain JEC21 / ATCC MYA-565) (Filobasidiella neoformans) protein is Vacuolar ATPase assembly integral membrane protein VMA21.